The sequence spans 318 residues: Transaldolase (318 aa).

Catalysis depends on Lys132, which acts as the Schiff-base intermediate with substrate.

The protein belongs to the transaldolase family. Type 1 subfamily. Homodimer.

The protein localises to the cytoplasm. It catalyses the reaction D-sedoheptulose 7-phosphate + D-glyceraldehyde 3-phosphate = D-erythrose 4-phosphate + beta-D-fructose 6-phosphate. The protein operates within carbohydrate degradation; pentose phosphate pathway; D-glyceraldehyde 3-phosphate and beta-D-fructose 6-phosphate from D-ribose 5-phosphate and D-xylulose 5-phosphate (non-oxidative stage): step 2/3. In terms of biological role, transaldolase is important for the balance of metabolites in the pentose-phosphate pathway. The sequence is that of Transaldolase from Shewanella sp. (strain MR-4).